An 825-amino-acid chain; its full sequence is IQ and AAA domain-containing protein 1-like (825 aa).

The IQ domain maps to 206–235 (RDQGAIVIQKVWKGYLQRKRIEQDRRVEME). Residues 344–366 (QAQESRKKDQEKKEKNKEKEKEK) are compositionally biased toward basic and acidic residues. 2 disordered regions span residues 344 to 378 (QAQE…KEEK) and 459 to 487 (DREE…KDLT). Residues 467–482 (KSPKKKGGKKSGKKKK) show a composition bias toward basic residues. 572 to 579 (GPSGMGKK) contacts ATP.

It belongs to the AAA ATPase family.

This chain is IQ and AAA domain-containing protein 1-like (Iqca1l), found in Mus musculus (Mouse).